A 358-amino-acid chain; its full sequence is Phosphoserine aminotransferase (358 aa).

R41 contributes to the L-glutamate binding site. Residues 75-76, W100, T148, D167, and Q190 contribute to the pyridoxal 5'-phosphate site; that span reads AS. Position 191 is an N6-(pyridoxal phosphate)lysine (K191). Residue 233 to 234 coordinates pyridoxal 5'-phosphate; that stretch reads NT.

The protein belongs to the class-V pyridoxal-phosphate-dependent aminotransferase family. SerC subfamily. In terms of assembly, homodimer. It depends on pyridoxal 5'-phosphate as a cofactor.

It is found in the cytoplasm. The enzyme catalyses O-phospho-L-serine + 2-oxoglutarate = 3-phosphooxypyruvate + L-glutamate. It carries out the reaction 4-(phosphooxy)-L-threonine + 2-oxoglutarate = (R)-3-hydroxy-2-oxo-4-phosphooxybutanoate + L-glutamate. It functions in the pathway amino-acid biosynthesis; L-serine biosynthesis; L-serine from 3-phospho-D-glycerate: step 2/3. It participates in cofactor biosynthesis; pyridoxine 5'-phosphate biosynthesis; pyridoxine 5'-phosphate from D-erythrose 4-phosphate: step 3/5. Functionally, catalyzes the reversible conversion of 3-phosphohydroxypyruvate to phosphoserine and of 3-hydroxy-2-oxo-4-phosphonooxybutanoate to phosphohydroxythreonine. This Campylobacter lari (strain RM2100 / D67 / ATCC BAA-1060) protein is Phosphoserine aminotransferase.